A 213-amino-acid chain; its full sequence is NDR1/HIN1-like protein 26 (213 aa).

Topologically, residues 1–27 (MSQISITSPKHCAKKGGININNRHKKL) are cytoplasmic. A helical membrane pass occupies residues 28-48 (FFTFSTFFSGLLLIIFLVWLI). Residues 49–213 (LHPERPEFSL…LQGTRCSTTI (165 aa)) lie on the Lumenal side of the membrane. Residues asparagine 67, asparagine 77, and asparagine 195 are each glycosylated (N-linked (GlcNAc...) asparagine).

As to expression, expressed in the vasculature of roots, rosette leaves, stems, cauline leaves and flowers. Specifically expressed in phloem.

The protein localises to the cell junction. Its subcellular location is the plasmodesma. It is found in the endoplasmic reticulum membrane. In terms of biological role, involved in the regulation of sugar, amino acid and some primary metabolite export from companion cells (CCs) to sieve elements (SEs) in phloem. Required for apoplastic phloem sugar loading in source leaves in order to transport it to sink tissues. Required for correct sugar partitioning between source leaves and sink organs. The sequence is that of NDR1/HIN1-like protein 26 from Arabidopsis thaliana (Mouse-ear cress).